We begin with the raw amino-acid sequence, 181 residues long: MKNLFILALLAFTATSAVAQLYTTCSQGYGQCQQQPQPQPQPQPQPQMNTCSAFLQQCSQTAYVQSQMWQASGCQLMRQQCCQPLAQISEQARCQAVCSVAQIIMRQQQGQRFGQPQQQQGQSFSQPQQQVPVEIMGMVLQTLPSMCSVNIPQYCTTTPCSTIAPAIYNIPMTATCAGGAC.

A signal peptide spans 1-19 (MKNLFILALLAFTATSAVA).

It belongs to the prolamin family. Contains 7 disulfide bonds.

Its function is as follows. Seed storage protein. Not integrated in the gluten polymer through disulfide bonds, unless incorporated by reduction and reoxidation during dough making. Increases dough strength and bread volume, but decreases dough stability when added into a base wheat flour. In Triticum aestivum (Wheat), this protein is Avenin-like a6.